The sequence spans 330 residues: Small ribosomal subunit protein uS15m (330 aa).

The protein belongs to the universal ribosomal protein uS15 family. As to quaternary structure, component of the mitochondrial ribosome small subunit (28S) which comprises a 12S rRNA and about 30 distinct proteins.

Its subcellular location is the mitochondrion. The protein is Small ribosomal subunit protein uS15m (mrps-15) of Caenorhabditis elegans.